Here is a 445-residue protein sequence, read N- to C-terminus: MSNRKYFGTDGIRGRVGDAPITPDFVLKLGWAAGKVLARHGSRKIIIGKDTRISGYMLESALEAGLAAAGLSALFTGPMPTPAVAYLTRTFRAEAGIVISASHNPFYDNGIKFFSIDGTKLPDAVEEAIEAEMEKEISCVDSAELGKASRIVDAAGRYIEFCKATFPNELSLSELKIVVDCANGATYHIAPNVLRELGANVIAIGCEPNGVNINAEVGATDVRALQARVLAEKADLGIAFDGDGDRVIMVDHEGNKVDGDQIMYIIAREGLRQGQLRGGAVGTLMSNMGLELALKQLGIPFARAKVGDRYVLEKMQEKGWRIGAENSGHVILLDKTTTGDGIVAGLQVLAAMARNHMSLHDLCSGMKMFPQILVNVRYTAGSGDPLEHESVKAVTAEVEVALGNRGRVLLRKSGTEPLIRVMVEGEDEAQVTEFAHRIADAVKAV.

Ser-102 acts as the Phosphoserine intermediate in catalysis. The Mg(2+) site is built by Ser-102, Asp-241, Asp-243, and Asp-245. Ser-102 bears the Phosphoserine mark.

The protein belongs to the phosphohexose mutase family. Requires Mg(2+) as cofactor. Activated by phosphorylation.

The catalysed reaction is alpha-D-glucosamine 1-phosphate = D-glucosamine 6-phosphate. Its function is as follows. Catalyzes the conversion of glucosamine-6-phosphate to glucosamine-1-phosphate. This chain is Phosphoglucosamine mutase, found in Escherichia coli (strain 55989 / EAEC).